The chain runs to 367 residues: Peptide chain release factor 2 (367 aa).

Glutamine 249 is modified (N5-methylglutamine).

This sequence belongs to the prokaryotic/mitochondrial release factor family. Post-translationally, methylated by PrmC. Methylation increases the termination efficiency of RF2.

The protein localises to the cytoplasm. Its function is as follows. Peptide chain release factor 2 directs the termination of translation in response to the peptide chain termination codons UGA and UAA. This is Peptide chain release factor 2 from Pseudothermotoga lettingae (strain ATCC BAA-301 / DSM 14385 / NBRC 107922 / TMO) (Thermotoga lettingae).